A 450-amino-acid polypeptide reads, in one-letter code: GTPase HflX (450 aa).

2 disordered regions span residues Thr-79–Ala-110 and Arg-173–Leu-196. Residues Ser-178–Ala-189 show a composition bias toward gly residues. A Hflx-type G domain is found at Leu-230–Met-395. GTP is bound by residues Gly-236–Ser-243, Phe-261–Asp-265, Asp-283–Gly-286, Asn-349–Asp-352, and Ser-373–His-375. Mg(2+)-binding residues include Ser-243 and Thr-263.

Belongs to the TRAFAC class OBG-HflX-like GTPase superfamily. HflX GTPase family. Monomer. Associates with the 50S ribosomal subunit. Requires Mg(2+) as cofactor.

It localises to the cytoplasm. Its function is as follows. GTPase that associates with the 50S ribosomal subunit and may have a role during protein synthesis or ribosome biogenesis. The sequence is that of GTPase HflX from Gluconacetobacter diazotrophicus (strain ATCC 49037 / DSM 5601 / CCUG 37298 / CIP 103539 / LMG 7603 / PAl5).